Here is a 366-residue protein sequence, read N- to C-terminus: tRNA/tmRNA (uracil-C(5))-methyltransferase (366 aa).

S-adenosyl-L-methionine is bound by residues glutamine 190, tyrosine 218, asparagine 223, glutamate 239, and aspartate 299. Cysteine 324 acts as the Nucleophile in catalysis. Glutamate 358 functions as the Proton acceptor in the catalytic mechanism.

The protein belongs to the class I-like SAM-binding methyltransferase superfamily. RNA M5U methyltransferase family. TrmA subfamily.

The enzyme catalyses uridine(54) in tRNA + S-adenosyl-L-methionine = 5-methyluridine(54) in tRNA + S-adenosyl-L-homocysteine + H(+). It carries out the reaction uridine(341) in tmRNA + S-adenosyl-L-methionine = 5-methyluridine(341) in tmRNA + S-adenosyl-L-homocysteine + H(+). Its function is as follows. Dual-specificity methyltransferase that catalyzes the formation of 5-methyluridine at position 54 (m5U54) in all tRNAs, and that of position 341 (m5U341) in tmRNA (transfer-mRNA). This Salmonella choleraesuis (strain SC-B67) protein is tRNA/tmRNA (uracil-C(5))-methyltransferase.